The primary structure comprises 157 residues: 2-amino-4-hydroxy-6-hydroxymethyldihydropteridine pyrophosphokinase (157 aa).

It belongs to the HPPK family.

It carries out the reaction 6-hydroxymethyl-7,8-dihydropterin + ATP = (7,8-dihydropterin-6-yl)methyl diphosphate + AMP + H(+). Its pathway is cofactor biosynthesis; tetrahydrofolate biosynthesis; 2-amino-4-hydroxy-6-hydroxymethyl-7,8-dihydropteridine diphosphate from 7,8-dihydroneopterin triphosphate: step 4/4. Functionally, catalyzes the transfer of pyrophosphate from adenosine triphosphate (ATP) to 6-hydroxymethyl-7,8-dihydropterin, an enzymatic step in folate biosynthesis pathway. The polypeptide is 2-amino-4-hydroxy-6-hydroxymethyldihydropteridine pyrophosphokinase (folK) (Campylobacter jejuni subsp. jejuni serotype O:2 (strain ATCC 700819 / NCTC 11168)).